The sequence spans 803 residues: PR domain zinc finger protein 4 (803 aa).

In terms of domain architecture, SET spans 408–532; that stretch reads KQLVLRQSIV…PESELLFYYS (125 aa). 5 consecutive C2H2-type zinc fingers follow at residues 593–615, 621–643, 649–671, 677–699, and 705–727; these read WKCSMCPQAFISPSKLHVHFMGH, HKCDFCSKAFSDPSNLRTHLKIH, YRCTLCDKSFTQKAHLESHMVIH, LKCDYCDKLFMRRQDLKQHVLIH, and IKCPKCDKLFLRTNHLKKHLNSH. The C2H2-type 6; degenerate zinc finger occupies 733–755; it reads YVCEKCTKAYLTKYHLTRHLKTC. Residues 757 to 803 form a disordered region; the sequence is EPSSSSSAQEEEDDESEEEDLADSMRTEDCRMGSAVYSTDESLSAHK. The span at 765–778 shows a compositional bias: acidic residues; it reads QEEEDDESEEEDLA. Over residues 792-803 the composition is skewed to polar residues; the sequence is VYSTDESLSAHK.

The protein belongs to the class V-like SAM-binding methyltransferase superfamily.

Its subcellular location is the nucleus. In terms of biological role, may function as a transcription factor involved in cell differentiation. The protein is PR domain zinc finger protein 4 (Prdm4) of Mus musculus (Mouse).